The primary structure comprises 160 residues: 2-C-methyl-D-erythritol 2,4-cyclodiphosphate synthase (160 aa).

Residues aspartate 11 and histidine 13 each coordinate a divalent metal cation. 4-CDP-2-C-methyl-D-erythritol 2-phosphate is bound by residues 11-13 (DVH) and 37-38 (HS). Residue histidine 45 participates in a divalent metal cation binding. 4-CDP-2-C-methyl-D-erythritol 2-phosphate-binding positions include 59 to 61 (DIG), 64 to 68 (FPDTD), 103 to 109 (AQAPKMA), 135 to 138 (TTTE), phenylalanine 142, and arginine 145.

Belongs to the IspF family. Homotrimer. It depends on a divalent metal cation as a cofactor.

It catalyses the reaction 4-CDP-2-C-methyl-D-erythritol 2-phosphate = 2-C-methyl-D-erythritol 2,4-cyclic diphosphate + CMP. Its pathway is isoprenoid biosynthesis; isopentenyl diphosphate biosynthesis via DXP pathway; isopentenyl diphosphate from 1-deoxy-D-xylulose 5-phosphate: step 4/6. In terms of biological role, involved in the biosynthesis of isopentenyl diphosphate (IPP) and dimethylallyl diphosphate (DMAPP), two major building blocks of isoprenoid compounds. Catalyzes the conversion of 4-diphosphocytidyl-2-C-methyl-D-erythritol 2-phosphate (CDP-ME2P) to 2-C-methyl-D-erythritol 2,4-cyclodiphosphate (ME-CPP) with a corresponding release of cytidine 5-monophosphate (CMP). The protein is 2-C-methyl-D-erythritol 2,4-cyclodiphosphate synthase of Thioalkalivibrio sulfidiphilus (strain HL-EbGR7).